The chain runs to 621 residues: MSSTPAQENGTVNGANAAPAPAPAQTTPTPAPATAATPTTAPAASANGTAANAMKPEASSNSSNSASNGTTPAPSTTPTTASNSSAPAAAQDESLVCRWAECNERFTSAEVLYEHICEKHVGRKSTNNLNLTCQWNSCRTTTVKRDHITSHVRVHVPLKPHKCDFCGKCFKRPQDLKKHVKTHADDSVLVGRSPQDQNGGMNGAYRAQAPVHKAPSGFYDHNGHMRGTNQVPFGQPHQNGQASYYHAQYPASQPYHAPMYYPAQTMGGQRNDFTGHQAAPFDARKRQFDDLNDFFGSVKRRQINPTSYESVGRALMPLHAPLGLHSGGLATEYMAQPPHTLGMASAHHPLTQHYYLPPMPNLRTKEDLQQMDHFLEQMQATVYENTAVDMRHHSPTYATRPSIDPYHGASLASPLSATSPHSAGTPAVTPTPSNMSYTSGHSPSTSSTSLSPTSRHSSTPSVSYPTLPSRPGLPYPSTSGLGSNFTHNERRLSGGVLQSARRAADEADRAPTPKASEQATVSSPSEDSETGDVNGPETYDDWLQHMRVIEYLRQGIRARLERQDFDEDDTSRIDPMVLESSDRNQQQRNQQQQQQKSPNEPTAAGPSAPEKPLYPVLPRIN.

A compositionally biased stretch (polar residues) spans 1–14 (MSSTPAQENGTVNG). Residues 1 to 87 (MSSTPAQENG…PTTASNSSAP (87 aa)) form a disordered region. The span at 15–87 (ANAAPAPAPA…PTTASNSSAP (73 aa)) shows a compositional bias: low complexity. 3 consecutive C2H2-type zinc fingers follow at residues 95 to 120 (LVCR…CEKH), 131 to 155 (LTCQ…VRVH), and 161 to 183 (HKCD…VKTH). Disordered regions lie at residues 395–539 (PTYA…PETY) and 566–621 (DEDD…PRIN). 2 stretches are compositionally biased toward low complexity: residues 409-423 (ASLA…PHSA) and 436-465 (SYTS…VSYP). Positions 464–467 (YPTL) match the YPX[LI] motif 1 motif. A compositionally biased stretch (polar residues) spans 476–486 (PSTSGLGSNFT). Basic and acidic residues predominate over residues 502–511 (RAADEADRAP). A compositionally biased stretch (polar residues) spans 515–525 (ASEQATVSSPS). Low complexity predominate over residues 583-595 (RNQQQRNQQQQQQ). The YPX[LI] motif 2 signature appears at 614 to 617 (YPVL).

The protein belongs to the pacC/RIM101 family. Binds to DNA. Interacts with palA/prr-1, which binds to the two YPX[LI] motifs and is required for proteolytic processing. Activated by C-terminal proteolytic cleavage by signaling protease (probably palB/RIM13) at neutral to alkaline ambient pH.

Its subcellular location is the cytoplasm. It localises to the nucleus. In terms of biological role, transcription factor that mediates regulation of both acid- and alkaline-expressed genes in response to ambient pH. At alkaline ambient pH, activates transcription of alkaline-expressed genes (including pacc-1 itself) and represses transcription of acid-expressed genes. This Neurospora crassa (strain ATCC 24698 / 74-OR23-1A / CBS 708.71 / DSM 1257 / FGSC 987) protein is pH-response transcription factor pacc-1 (pacc-1).